The primary structure comprises 713 residues: MFLSLVVYLSKICRYLSMFSSDRLTVPEYVSSRLHNRRTAPDPRAVSPGISTDVQAVLDGSLPALRSAIRTLRSSKDTGDLEETRRAIAETFQLVEEAWVLPTVGRRVAEEICNRIRLDGGLELLLQLMQTPAVEITYESAKLLEQILVSENRDYVARMGLGVILNLTREQEDAQLARSVSGILEHMFKHTEETSAQLITNGALDTILYWCRGTDPTVLRHCAVALSNCAMYGGHRCQRLMIEKQAAEWLFPLAFSKEDELIRFHACLAVAVLAANREMEKEVVKSGTLELVEPFIASLDPDEFARNMLDSADSMQGRTAADLQHLLPLLDGTRLEGKCIAAFYLCVETSIKSRQRNTKIFQEIGAVQSLKRIVMYSSNATVCSLAKRALKMMSEEVPRRILSSVPNWKSGEVQTWLQQIGFSAFSERFQELQVDGDLLLNITEQDLIQDLGMTSGLTRKRFLRDLRVLKTYANYSTCDPNNLADWLADADPRFRQYTYGLVQSGVDRNNIVHITDQQLLTDCHVENGIHRAKILSAARRPSKPCLTDSQPKGPDVFISYRRTTGSQLASLLKVHLQLRGFSVFIDVEKLEAGRFEEKLITSVQRARNFILVLSANALDKCMGDVAMKDWVHKEIVTALNGKKNIVPVTDNFVWPDPTSLPEDMSTILKFNGIKWSHEYQEATIEKILRFLEGCPSQEKPDGAKTDKKEPQKK.

Residues 53–96 (DVQAVLDGSLPALRSAIRTLRSSKDTGDLEETRRAIAETFQLVE) form an ARM 1 repeat. Residues W99, R106, 145–153 (EQILVSENR), and 186–189 (HMFK) contribute to the NAD(+) site. ARM repeat units follow at residues 110–149 (EEIC…QILV), 151–189 (ENRD…HMFK), 192–231 (EETS…NCAM), 233–276 (GGHR…LAAN), 277–310 (REME…NMLD), 311–350 (SADS…VETS), and 355–398 (QRNT…EEVP). 2 consecutive SAM domains span residues 408–472 (WKSG…LKTY) and 478–537 (CDPN…ILSA). The TIR domain occupies 552 to 695 (KGPDVFISYR…KILRFLEGCP (144 aa)). Residues 561 to 562 (RR) and E591 contribute to the NAD(+) site. The active site involves E634.

Belongs to the SARM1 family. Homooctamer; forms an octameric ring via SAM domains.

Its subcellular location is the cytoplasm. The protein resides in the cell projection. It is found in the axon. The protein localises to the dendrite. It localises to the synapse. Its subcellular location is the mitochondrion. It catalyses the reaction NAD(+) + H2O = ADP-D-ribose + nicotinamide + H(+). It carries out the reaction NAD(+) = cyclic ADP-beta-D-ribose + nicotinamide + H(+). The enzyme catalyses NADP(+) + H2O = ADP-D-ribose 2'-phosphate + nicotinamide + H(+). Autoinhibited: in the inactive state, the enzymatic TIR domain is held apart by the autoinhibiting ARM repeats. NAD(+)-binding to ARM repeats maintains an inactive state by promoting interaction between ARM repeats and the TIR domain, thereby facilitating inhibition of the enzymatic TIR domain. Following activation, possibly by nicotinamide mononucleotide (NMN), auto-inhibitory interactions are released, allowing self-association of the TIR domains and subsequent activation of the NAD(+) hydrolase (NADase) activity. Self-association of TIR domains is facilitated by the octamer of SAM domains. NAD(+) hydrolase, which plays a key role in axonal degeneration following injury by regulating NAD(+) metabolism. Acts as a negative regulator of MYD88- and TRIF-dependent toll-like receptor signaling pathway by promoting Wallerian degeneration, an injury-induced form of programmed subcellular death which involves degeneration of an axon distal to the injury site. Wallerian degeneration is triggerred by NAD(+) depletion: in response to injury, SARM1 is activated and catalyzes cleavage of NAD(+) into ADP-D-ribose (ADPR), cyclic ADPR (cADPR) and nicotinamide; NAD(+) cleavage promoting cytoskeletal degradation and axon destruction. Also able to hydrolyze NADP(+), but not other NAD(+)-related molecules. Can activate neuronal cell death in response to stress. In Danio rerio (Zebrafish), this protein is NAD(+) hydrolase SARM1.